The sequence spans 1412 residues: DNA-directed RNA polymerase subunit beta' (1412 aa).

Residues cysteine 70, cysteine 72, cysteine 85, and cysteine 88 each coordinate Zn(2+). Mg(2+)-binding residues include aspartate 460, aspartate 462, and aspartate 464. The Zn(2+) site is built by cysteine 819, cysteine 893, cysteine 900, and cysteine 903. Residues 1393 to 1412 (EAFEFGTPSAPAEEPQHPAE) are disordered.

The protein belongs to the RNA polymerase beta' chain family. The RNAP catalytic core consists of 2 alpha, 1 beta, 1 beta' and 1 omega subunit. When a sigma factor is associated with the core the holoenzyme is formed, which can initiate transcription. Mg(2+) is required as a cofactor. Requires Zn(2+) as cofactor.

The enzyme catalyses RNA(n) + a ribonucleoside 5'-triphosphate = RNA(n+1) + diphosphate. Functionally, DNA-dependent RNA polymerase catalyzes the transcription of DNA into RNA using the four ribonucleoside triphosphates as substrates. The chain is DNA-directed RNA polymerase subunit beta' from Burkholderia pseudomallei (strain 1106a).